An 836-amino-acid chain; its full sequence is Protein IWS1 homolog A (836 aa).

The interval 1–542 is disordered; sequence MEADNYSPEH…DMKSGKMGDY (542 aa). Basic and acidic residues-rich tracts occupy residues 20-36, 43-122, 133-148, 157-186, 206-218, 288-309, 370-386, and 458-469; these read QDERDSASDDEGNEQRS, HQSE…DRSP, EPVRHSASDSEDDVPR, DERHIKKTASDSEDEAPAKHRVSDTEDKAP, DSKDEAPPKHAAS, VPVKRAASDSEEETHPKGKASD, RSSESDSSDKVDGKKLQ, and ERKSKTETKSAD. Acidic residues predominate over residues 476–485; it reads SDSENEEENL. Residues 533–542 show a composition bias toward basic and acidic residues; sequence DMKSGKMGDY. One can recognise a TFIIS N-terminal domain in the interval 631–709; sequence SAIKEWLTPL…NEWSRPIFGL (79 aa). The disordered stretch occupies residues 714 to 746; the sequence is KGMTREEREQRDIEQMPQRRRMSSSGGQTPRRD. A compositionally biased stretch (basic and acidic residues) spans 716–727; it reads MTREEREQRDIE.

This sequence belongs to the IWS1 family.

The protein resides in the nucleus. Its function is as follows. Transcription factor which plays a key role in defining the composition of the RNA polymerase II (RNAPII) elongation complex and in modulating the production of mature mRNA transcripts. This Xenopus laevis (African clawed frog) protein is Protein IWS1 homolog A (iws1-a).